The primary structure comprises 378 residues: Queuine tRNA-ribosyltransferase (378 aa).

Catalysis depends on Asp-90, which acts as the Proton acceptor. Substrate-binding positions include 90 to 94 (DSGGF), Asp-144, Gln-188, and Gly-220. The interval 251-257 (GVGTPED) is RNA binding. Asp-270 acts as the Nucleophile in catalysis. Residues 275 to 279 (TRNAR) form an RNA binding; important for wobble base 34 recognition region. Zn(2+) contacts are provided by Cys-308, Cys-310, Cys-313, and His-339.

Belongs to the queuine tRNA-ribosyltransferase family. As to quaternary structure, homodimer. Within each dimer, one monomer is responsible for RNA recognition and catalysis, while the other monomer binds to the replacement base PreQ1. Requires Zn(2+) as cofactor.

The catalysed reaction is 7-aminomethyl-7-carbaguanine + guanosine(34) in tRNA = 7-aminomethyl-7-carbaguanosine(34) in tRNA + guanine. It participates in tRNA modification; tRNA-queuosine biosynthesis. Functionally, catalyzes the base-exchange of a guanine (G) residue with the queuine precursor 7-aminomethyl-7-deazaguanine (PreQ1) at position 34 (anticodon wobble position) in tRNAs with GU(N) anticodons (tRNA-Asp, -Asn, -His and -Tyr). Catalysis occurs through a double-displacement mechanism. The nucleophile active site attacks the C1' of nucleotide 34 to detach the guanine base from the RNA, forming a covalent enzyme-RNA intermediate. The proton acceptor active site deprotonates the incoming PreQ1, allowing a nucleophilic attack on the C1' of the ribose to form the product. After dissociation, two additional enzymatic reactions on the tRNA convert PreQ1 to queuine (Q), resulting in the hypermodified nucleoside queuosine (7-(((4,5-cis-dihydroxy-2-cyclopenten-1-yl)amino)methyl)-7-deazaguanosine). This is Queuine tRNA-ribosyltransferase from Nautilia profundicola (strain ATCC BAA-1463 / DSM 18972 / AmH).